Here is a 764-residue protein sequence, read N- to C-terminus: Phenylalanine--tRNA ligase beta subunit (764 aa).

The 111-residue stretch at C38–N148 folds into the tRNA-binding domain. One can recognise a B5 domain in the interval L375–S455. Mg(2+)-binding residues include D433, D439, E442, and E443. One can recognise an FDX-ACB domain in the interval S673 to K763.

Belongs to the phenylalanyl-tRNA synthetase beta subunit family. Type 1 subfamily. Tetramer of two alpha and two beta subunits. Mg(2+) is required as a cofactor.

Its subcellular location is the cytoplasm. It catalyses the reaction tRNA(Phe) + L-phenylalanine + ATP = L-phenylalanyl-tRNA(Phe) + AMP + diphosphate + H(+). This Helicobacter pylori (strain ATCC 700392 / 26695) (Campylobacter pylori) protein is Phenylalanine--tRNA ligase beta subunit (pheT).